The following is a 413-amino-acid chain: MKYEKLLPRFLEYVKVNTRSDENSTTTPSTQALVEFAHKMGEDMKALGLKDVHYLESNGYVIGTIPANTDKKVRKIGLLAHLDTADFNAEGVNPQILENYDGESVIQLGDTEFTLDPKDFPNLKNYKGQTLVHTDGTTLLGSDDKSGVAEIMTLADYLLNINPDFEHGEIRVGFGPDEEIGVGADKFDVADFDVDFAYTVDGGPLGELQYETFSAAGAVIEFQGKNVHPGTAKNMMVNALQLAIDYHNALPEFDRPEKTEGREGFFHLLKLDGTPEEARAQYIIRDHEEGKFNERKALMQEIADKMNAELGQNRVKPVIKDQYYNMAQIIEKDMSIIDIAKKAMENLDIAPIIEPIRGGTDGSKISFMGLPTPNLFAGGENMHGRFEFVSVQTMEKAVDTLLEIIRLNNEVAK.

Residue His-81 participates in Zn(2+) binding. Asp-83 is a catalytic residue. Asp-143 contributes to the Zn(2+) binding site. The active-site Proton acceptor is Glu-178. Glu-179, Asp-201, and His-383 together coordinate Zn(2+).

Belongs to the peptidase M20B family. Zn(2+) is required as a cofactor.

Its subcellular location is the cytoplasm. The catalysed reaction is Release of the N-terminal residue from a tripeptide.. Functionally, cleaves the N-terminal amino acid of tripeptides. The protein is Peptidase T of Lactococcus lactis subsp. cremoris (Streptococcus cremoris).